The sequence spans 684 residues: MSAKDFLVELGTEELPPKALNSLGEAFLSGIEKGLKAAGLSYAAARFYAAPRRLAVLVEQLAVQQPDRTVNLDGPPLQAAFDASGNPTQAALGFAKKCGVDLQQIDKSGPKLRFIQTIAGQPAAGLLPGIVEASLNELPIPKRMRWAARREEFVRPTQWLVMLFGDDVVECEILAQKAGRESRGHRFHNPDNVRISSPAAYLEDLRGAHVLADFAERRELIAKRVAELAAEQQGSAIVPPSLLDEVTALVEWPVPLVCSFEERFLEVPQEALITTMQDNQKYFCLLDANGKLLPRFITVANVESKAPENIVSGNEKVVRPRLTDAEFFFKQDKKQPLESFNERLRNVVFQAQLGTVFEKAQRVSGLAAYIAERIGGNAQNASRAGILSKCDLATEMVGEFPEMQGIAGYYYATHGGEAEDVALALNEQYMPRGAGAELPSTLTGAAVAVADKLDTLVGIFGIGMLPTGSKDPYALRRAALGVLRILIEKQLDLDLVAAVNAAVEQYGDKVKAAGLAEQVLDFVFDRLRARYEDEGVDVAVYQSVRALKPSSPLDFDQRVQAVQAFRQLPEAEALAAANKRVSNILAKSEDEVPPNVDASLLVEAAEKALGSAVANAESEVAPLAAARDYRAALARLAALREPVDTFFADVMVNVDDAAVRANRYALLAKLRGSFLGVADISLLG.

This sequence belongs to the class-II aminoacyl-tRNA synthetase family. In terms of assembly, tetramer of two alpha and two beta subunits.

Its subcellular location is the cytoplasm. The enzyme catalyses tRNA(Gly) + glycine + ATP = glycyl-tRNA(Gly) + AMP + diphosphate. The sequence is that of Glycine--tRNA ligase beta subunit from Pseudomonas aeruginosa (strain ATCC 15692 / DSM 22644 / CIP 104116 / JCM 14847 / LMG 12228 / 1C / PRS 101 / PAO1).